We begin with the raw amino-acid sequence, 841 residues long: Rhomboid-like protease 5 (841 aa).

Low complexity predominate over residues 1 to 10 (MSSKGGSSRL). Residues 1–289 (MSSKGGSSRL…GGDGGPRRHS (289 aa)) are disordered. Residues 11–51 (GSKDLKKMTSRTERELRDSGRVRGEVERVEKRLRATAKVKE) are compositionally biased toward basic and acidic residues. Over residues 95–132 (LRPASSSPRLASSSRPTESTLPSSSSRALQGASSSSSS) the composition is skewed to low complexity. Composition is skewed to basic and acidic residues over residues 154 to 163 (LRQEKKRLPE), 209 to 230 (RTAE…RGSV), and 243 to 275 (SSHE…RSGD). Helical transmembrane passes span 323 to 343 (FLMI…ELVL), 464 to 484 (MFRV…LLNV), 492 to 512 (WILE…VGGV), 526 to 546 (VTVG…PFSI), 571 to 590 (FGNM…GGLI), and 673 to 693 (FAAA…LLVP). The active-site Nucleophile is the S531. Residue H585 is part of the active site.

Belongs to the peptidase S54 family.

It is found in the membrane. It carries out the reaction Cleaves type-1 transmembrane domains using a catalytic dyad composed of serine and histidine that are contributed by different transmembrane domains.. Functionally, serine protease involved in intramembrane proteolysis. Cleaves microneme adhesins, such as MIC2. This step is essential for efficient invasion of host cells. Catalyzes intramembrane proteolysis of AMA1. The chain is Rhomboid-like protease 5 (ROM5) from Toxoplasma gondii.